We begin with the raw amino-acid sequence, 331 residues long: Olfactory receptor 7D11 (331 aa).

Residues 1–25 lie on the Extracellular side of the membrane; sequence MEIENHTLITKFLILGLSDDPELQP. N-linked (GlcNAc...) asparagine glycosylation occurs at Asn5. Residues 26–46 form a helical membrane-spanning segment; sequence ILFGLFLSMYLVTLLGNLLII. The Cytoplasmic portion of the chain corresponds to 47–57; the sequence is LAVSSDSHLHK. The helical transmembrane segment at 58 to 78 threads the bilayer; sequence PMYFLLSNLSFIDICFISTTI. Residues 79-97 lie on the Extracellular side of the membrane; the sequence is PKMLVNMQSQIKDISYIEC. Residues Cys97 and Cys179 are joined by a disulfide bond. A helical membrane pass occupies residues 98–118; it reads LTQVFFFNIFAGMDNFLLTLM. Residues 119–142 are Cytoplasmic-facing; the sequence is AYDRFVAICHPLNYTVIMNPRLCA. Residues 143–163 traverse the membrane as a helical segment; it reads LLILMFWIIMFWVSLIHVLLM. Topologically, residues 164 to 196 are extracellular; it reads NELNFSRGTEIPHFFCELAQVLKVSNSDNHVNN. Residue Asn167 is glycosylated (N-linked (GlcNAc...) asparagine). Residues 197 to 217 traverse the membrane as a helical segment; the sequence is VFMYVVTSLLGVIPMTGILMS. At 218–244 the chain is on the cytoplasmic side; sequence YSQIFSSLFRMSSTVSKYKAFSTCGSH. Residues 245-265 form a helical membrane-spanning segment; the sequence is LCVVTLFYGSGFGVYFSSSVV. The Extracellular portion of the chain corresponds to 266–271; that stretch reads HSTQRR. Residues 272–292 traverse the membrane as a helical segment; it reads KVASLMYTVISPMLNPFIYTL. At 293 to 331 the chain is on the cytoplasmic side; the sequence is RNKDVKGALGKLFNRVASSPSCINDIRNKLLLRSVRQIL.

Belongs to the G-protein coupled receptor 1 family.

It is found in the cell membrane. Functionally, possible olfactory or taste receptor. The polypeptide is Olfactory receptor 7D11 (Mus musculus (Mouse)).